The following is a 217-amino-acid chain: 3,4-dihydroxy-2-butanone 4-phosphate synthase (217 aa).

D-ribulose 5-phosphate contacts are provided by residues 37–38 (RE), D42, 150–154 (RRGHT), and E174. E38 lines the Mg(2+) pocket. H153 serves as a coordination point for Mg(2+).

This sequence belongs to the DHBP synthase family. As to quaternary structure, homodimer. The cofactor is Mg(2+). Mn(2+) serves as cofactor.

The catalysed reaction is D-ribulose 5-phosphate = (2S)-2-hydroxy-3-oxobutyl phosphate + formate + H(+). It participates in cofactor biosynthesis; riboflavin biosynthesis; 2-hydroxy-3-oxobutyl phosphate from D-ribulose 5-phosphate: step 1/1. Catalyzes the conversion of D-ribulose 5-phosphate to formate and 3,4-dihydroxy-2-butanone 4-phosphate. This Shewanella loihica (strain ATCC BAA-1088 / PV-4) protein is 3,4-dihydroxy-2-butanone 4-phosphate synthase.